Consider the following 130-residue polypeptide: Large ribosomal subunit protein bL19 (130 aa).

The protein belongs to the bacterial ribosomal protein bL19 family.

Functionally, this protein is located at the 30S-50S ribosomal subunit interface and may play a role in the structure and function of the aminoacyl-tRNA binding site. The protein is Large ribosomal subunit protein bL19 of Psychrobacter arcticus (strain DSM 17307 / VKM B-2377 / 273-4).